Reading from the N-terminus, the 331-residue chain is MRLVFAGTPAVALPSLRALIDSPRHEVVAVVTRPDRPAGRGRKIKPPPVHLLADEAGIPVLSPERPRDPDFLAALTDLAPDCCPVVAYGALLPREALAIPRHGWVNLHFSLLPAYRGAAPVQRTVLAGDDLTGASVFQIEPAMDSGPVFGVVTERVRPTDTSGDLLDRLADSGAHLLAAVMDGIDDGTLQAVPQPAEGVSFAPKLTAQDALIDWTLPAVAVDRLTRAAAPAPGAWTVFRDRRIKIGPVRLGAQNVPDELAPGRLVALADGAVAVGTGTAPVLLDEVRPEGRGPMKAADWARGARLTDDDLLHAPAERVSAAGSPAGAGGAP.

Residue 110–113 participates in (6S)-5,6,7,8-tetrahydrofolate binding; the sequence is SLLP. The disordered stretch occupies residues 312-331; it reads HAPAERVSAAGSPAGAGGAP.

This sequence belongs to the Fmt family.

The enzyme catalyses L-methionyl-tRNA(fMet) + (6R)-10-formyltetrahydrofolate = N-formyl-L-methionyl-tRNA(fMet) + (6S)-5,6,7,8-tetrahydrofolate + H(+). Attaches a formyl group to the free amino group of methionyl-tRNA(fMet). The formyl group appears to play a dual role in the initiator identity of N-formylmethionyl-tRNA by promoting its recognition by IF2 and preventing the misappropriation of this tRNA by the elongation apparatus. The sequence is that of Methionyl-tRNA formyltransferase from Frankia alni (strain DSM 45986 / CECT 9034 / ACN14a).